The primary structure comprises 144 residues: Large ribosomal subunit protein uL16 (144 aa).

The protein belongs to the universal ribosomal protein uL16 family. In terms of assembly, part of the 50S ribosomal subunit.

Functionally, binds 23S rRNA and is also seen to make contacts with the A and possibly P site tRNAs. The sequence is that of Large ribosomal subunit protein uL16 from Lysinibacillus sphaericus (strain C3-41).